The primary structure comprises 403 residues: Chalcone synthase 2 (403 aa).

59 to 66 (RFQRMCES) contacts CoA. Cys168 acts as the Acyl-thioester intermediate in catalysis. A substrate-binding site is contributed by 220 to 221 (GD). Ala313 is a binding site for CoA.

It belongs to the thiolase-like superfamily. Chalcone/stilbene synthases family. Homodimer.

It carries out the reaction (E)-4-coumaroyl-CoA + 3 malonyl-CoA + 3 H(+) = 2',4,4',6'-tetrahydroxychalcone + 3 CO2 + 4 CoA. Its pathway is secondary metabolite biosynthesis; flavonoid biosynthesis. The primary product of this enzyme is 4,2',4',6'-tetrahydroxychalcone (also termed naringenin-chalcone or chalcone) which can under specific conditions spontaneously isomerize into naringenin. In Oryza sativa subsp. japonica (Rice), this protein is Chalcone synthase 2 (CHS2).